The primary structure comprises 530 residues: Ankyrin repeat domain-containing protein 53 (530 aa).

Residues 1 to 15 (MASAGSTARRAGSGS) are compositionally biased toward low complexity. The disordered stretch occupies residues 1 to 99 (MASAGSTARR…PSPSKESDQT (99 aa)). Residues 32 to 41 (PSGSMQQANK) are compositionally biased toward polar residues. 3 ANK repeats span residues 139-169 (KGFTAIHFAAQWGKLACLQVLVEEYKFPVDL), 173-206 (NSQTPLHLVIHRDNTTVALPCIYYLLEKGADLNA), and 210-239 (NGSTPLHLAARDGLLDCVKVLVQSGANVHA). Disordered regions lie at residues 323 to 360 (GHSLVSNTKQARATALSKTPEQRESQRSRSFHPSVDAR) and 383 to 402 (PTMWNVSNNPARPPTTQISH). Polar residues-rich tracts occupy residues 326-341 (LVSNTKQARATALSKT) and 386-402 (WNVSNNPARPPTTQISH).

Interacts with PSRC1; recruited by PSRC1 to the spindle during mitosis. Post-translationally, phosphorylated during mitosis.

The protein resides in the cytoplasm. It localises to the cytoskeleton. The protein localises to the spindle. Its subcellular location is the spindle pole. Its function is as follows. Required for normal progression through mitosis. Involved in chromosome alignment and cytokinesis via regulation of microtubules polymerization. This is Ankyrin repeat domain-containing protein 53 (ANKRD53) from Homo sapiens (Human).